The primary structure comprises 366 residues: Quinolinate synthase (366 aa).

Iminosuccinate contacts are provided by H44 and S61. Residue C108 coordinates [4Fe-4S] cluster. Residues 139–141 (YIN) and S160 each bind iminosuccinate. Position 228 (C228) interacts with [4Fe-4S] cluster. Residues 254–256 (HPE) and T271 each bind iminosuccinate. C318 is a [4Fe-4S] cluster binding site.

It belongs to the quinolinate synthase family. Type 3 subfamily. The cofactor is [4Fe-4S] cluster.

The protein localises to the cytoplasm. The enzyme catalyses iminosuccinate + dihydroxyacetone phosphate = quinolinate + phosphate + 2 H2O + H(+). It functions in the pathway cofactor biosynthesis; NAD(+) biosynthesis; quinolinate from iminoaspartate: step 1/1. Catalyzes the condensation of iminoaspartate with dihydroxyacetone phosphate to form quinolinate. The polypeptide is Quinolinate synthase (Listeria monocytogenes serovar 1/2a (strain ATCC BAA-679 / EGD-e)).